The chain runs to 225 residues: 3-dehydroquinate dehydratase (225 aa).

3-dehydroquinate is bound by residues 30 to 32 (EWR) and arginine 62. The active-site Proton donor/acceptor is the histidine 118. Lysine 143 functions as the Schiff-base intermediate with substrate in the catalytic mechanism. Arginine 186, serine 205, and glutamine 209 together coordinate 3-dehydroquinate.

It belongs to the type-I 3-dehydroquinase family. In terms of assembly, homodimer.

It catalyses the reaction 3-dehydroquinate = 3-dehydroshikimate + H2O. It functions in the pathway metabolic intermediate biosynthesis; chorismate biosynthesis; chorismate from D-erythrose 4-phosphate and phosphoenolpyruvate: step 3/7. Its function is as follows. Involved in the third step of the chorismate pathway, which leads to the biosynthesis of aromatic amino acids. Catalyzes the cis-dehydration of 3-dehydroquinate (DHQ) and introduces the first double bond of the aromatic ring to yield 3-dehydroshikimate. This chain is 3-dehydroquinate dehydratase, found in Streptococcus thermophilus (strain ATCC BAA-250 / LMG 18311).